The chain runs to 95 residues: Co-chaperonin GroES (95 aa).

Belongs to the GroES chaperonin family. As to quaternary structure, heptamer of 7 subunits arranged in a ring. Interacts with the chaperonin GroEL.

It localises to the cytoplasm. Its function is as follows. Together with the chaperonin GroEL, plays an essential role in assisting protein folding. The GroEL-GroES system forms a nano-cage that allows encapsulation of the non-native substrate proteins and provides a physical environment optimized to promote and accelerate protein folding. GroES binds to the apical surface of the GroEL ring, thereby capping the opening of the GroEL channel. The sequence is that of Co-chaperonin GroES from Rickettsia felis (strain ATCC VR-1525 / URRWXCal2) (Rickettsia azadi).